A 288-amino-acid polypeptide reads, in one-letter code: 4-diphosphocytidyl-2-C-methyl-D-erythritol kinase (288 aa).

The active site involves Lys13. An ATP-binding site is contributed by 97-107 (PMGGGIGGGSS). Residue Asp139 is part of the active site.

The protein belongs to the GHMP kinase family. IspE subfamily.

The catalysed reaction is 4-CDP-2-C-methyl-D-erythritol + ATP = 4-CDP-2-C-methyl-D-erythritol 2-phosphate + ADP + H(+). Its pathway is isoprenoid biosynthesis; isopentenyl diphosphate biosynthesis via DXP pathway; isopentenyl diphosphate from 1-deoxy-D-xylulose 5-phosphate: step 3/6. Functionally, catalyzes the phosphorylation of the position 2 hydroxy group of 4-diphosphocytidyl-2C-methyl-D-erythritol. This chain is 4-diphosphocytidyl-2-C-methyl-D-erythritol kinase, found in Saccharophagus degradans (strain 2-40 / ATCC 43961 / DSM 17024).